Consider the following 297-residue polypeptide: Acetyl-coenzyme A carboxylase carboxyl transferase subunit beta (297 aa).

The tract at residues 1–23 (MSWIERILGRTSSSSSSSKSKVP) is disordered. Residues 26-295 (VWTKCTSCEQ…PFKTAELIVE (270 aa)) enclose the CoA carboxyltransferase N-terminal domain. Zn(2+)-binding residues include C30, C33, C49, and C52. The segment at 30 to 52 (CTSCEQVLYSEELKRNMHVCPKC) adopts a C4-type zinc-finger fold.

The protein belongs to the AccD/PCCB family. In terms of assembly, acetyl-CoA carboxylase is a heterohexamer composed of biotin carboxyl carrier protein (AccB), biotin carboxylase (AccC) and two subunits each of ACCase subunit alpha (AccA) and ACCase subunit beta (AccD). Zn(2+) serves as cofactor.

It is found in the cytoplasm. It carries out the reaction N(6)-carboxybiotinyl-L-lysyl-[protein] + acetyl-CoA = N(6)-biotinyl-L-lysyl-[protein] + malonyl-CoA. It participates in lipid metabolism; malonyl-CoA biosynthesis; malonyl-CoA from acetyl-CoA: step 1/1. Its function is as follows. Component of the acetyl coenzyme A carboxylase (ACC) complex. Biotin carboxylase (BC) catalyzes the carboxylation of biotin on its carrier protein (BCCP) and then the CO(2) group is transferred by the transcarboxylase to acetyl-CoA to form malonyl-CoA. The chain is Acetyl-coenzyme A carboxylase carboxyl transferase subunit beta from Actinobacillus pleuropneumoniae serotype 3 (strain JL03).